A 201-amino-acid chain; its full sequence is Small ribosomal subunit protein uS4c (201 aa).

Residues 90 to 153 (MRLDNVIFRL…SSQNLVKRYL (64 aa)) form the S4 RNA-binding domain.

Belongs to the universal ribosomal protein uS4 family. Part of the 30S ribosomal subunit. Contacts protein S5. The interaction surface between S4 and S5 is involved in control of translational fidelity.

It is found in the plastid. The protein resides in the chloroplast. One of the primary rRNA binding proteins, it binds directly to 16S rRNA where it nucleates assembly of the body of the 30S subunit. In terms of biological role, with S5 and S12 plays an important role in translational accuracy. This is Small ribosomal subunit protein uS4c (rps4) from Gracilaria tenuistipitata var. liui (Red alga).